The sequence spans 381 residues: Lipid-A-disaccharide synthase (381 aa).

Belongs to the LpxB family.

The catalysed reaction is a lipid X + a UDP-2-N,3-O-bis[(3R)-3-hydroxyacyl]-alpha-D-glucosamine = a lipid A disaccharide + UDP + H(+). The protein operates within bacterial outer membrane biogenesis; LPS lipid A biosynthesis. Condensation of UDP-2,3-diacylglucosamine and 2,3-diacylglucosamine-1-phosphate to form lipid A disaccharide, a precursor of lipid A, a phosphorylated glycolipid that anchors the lipopolysaccharide to the outer membrane of the cell. This chain is Lipid-A-disaccharide synthase, found in Psychromonas ingrahamii (strain DSM 17664 / CCUG 51855 / 37).